A 402-amino-acid chain; its full sequence is Xylose/arabinose-binding protein XylF (402 aa).

A helical transmembrane segment spans residues 38–58 (GIIAGVLAAFGAGFGSGYVTA).

Belongs to the bacterial solute-binding protein 2 family. In terms of assembly, the complex is composed of two ATP-binding proteins (XylG), two transmembrane proteins (XylH) and a solute-binding protein (XylF).

Its subcellular location is the cell membrane. Functionally, part of the ABC transporter complex XylFGH involved in the uptake of xylose and arabinose. The chain is Xylose/arabinose-binding protein XylF from Sulfolobus acidocaldarius (strain ATCC 33909 / DSM 639 / JCM 8929 / NBRC 15157 / NCIMB 11770).